The chain runs to 619 residues: DNA polymerase II small subunit (619 aa).

Positions 78–122 are disordered; the sequence is EEAEKTVESQETRASELEEGGVSQVSSGELQELKEESPEISTTEE. Basic and acidic residues predominate over residues 79-93; the sequence is EAEKTVESQETRASE.

It belongs to the DNA polymerase delta/II small subunit family. As to quaternary structure, heterodimer of a large subunit and a small subunit.

The enzyme catalyses DNA(n) + a 2'-deoxyribonucleoside 5'-triphosphate = DNA(n+1) + diphosphate. It carries out the reaction Exonucleolytic cleavage in the 3'- to 5'-direction to yield nucleoside 5'-phosphates.. In terms of biological role, possesses two activities: a DNA synthesis (polymerase) and an exonucleolytic activity that degrades single-stranded DNA in the 3' to 5' direction. Has a template-primer preference which is characteristic of a replicative DNA polymerase. The polypeptide is DNA polymerase II small subunit (polB) (Pyrococcus abyssi (strain GE5 / Orsay)).